Here is a 387-residue protein sequence, read N- to C-terminus: Protein salvador homolog 1 (387 aa).

Phosphoserine is present on residues serine 95 and serine 138. 2 consecutive WW domains span residues 201–234 (LPLP…HPLE) and 236–269 (EGLP…HPCA). Threonine 212 is subject to Phosphothreonine. The region spanning 323–370 (ILKWELFQLADLDTYQGMLKLLFMKELEQIVKLYEAYRQALVTELENR) is the SARAH domain.

Homodimer. Stabilized through interaction with STK3/MST2 or STK4/MST1. Interacts (via SARAH domain) with isoform 1 of NEK2. Interacts with ESR1 only in the presence of STK3/MST2. Interacts with WTIP and AJUBA. In terms of processing, phosphorylated by STK3/MST2 and STK4/MST1. Phosphorylation is not required for SAV1 stability and may increase the number of protein binding sites on the scaffold molecule.

Its subcellular location is the nucleus. The protein localises to the cytoplasm. Functionally, regulator of STK3/MST2 and STK4/MST1 in the Hippo signaling pathway which plays a pivotal role in organ size control and tumor suppression by restricting proliferation and promoting apoptosis. The core of this pathway is composed of a kinase cascade wherein STK3/MST2 and STK4/MST1, in complex with its regulatory protein SAV1, phosphorylates and activates LATS1/2 in complex with its regulatory protein MOB1, which in turn phosphorylates and inactivates YAP1 oncoprotein and WWTR1/TAZ. Phosphorylation of YAP1 by LATS1/2 inhibits its translocation into the nucleus to regulate cellular genes important for cell proliferation, cell death, and cell migration. SAV1 is required for STK3/MST2 and STK4/MST1 activation and promotes cell-cycle exit and terminal differentiation in developing epithelial tissues. Plays a role in centrosome disjunction by regulating the localization of NEK2 to centrosomes, and its ability to phosphorylate CROCC and CEP250. In conjunction with STK3/MST2, activates the transcriptional activity of ESR1 through the modulation of its phosphorylation. This Rattus norvegicus (Rat) protein is Protein salvador homolog 1.